The sequence spans 1047 residues: Ubiquitin carboxyl-terminal hydrolase 48 (1047 aa).

One can recognise a USP domain in the interval valine 89–glutamine 416. Cysteine 98 serves as the catalytic Nucleophile. The active-site Proton acceptor is histidine 348. 3 consecutive DUSP domains span residues glutamine 457–leucine 551, asparagine 567–proline 697, and methionine 717–aspartate 830. Residues leucine 609–glutamate 647 are disordered. Residues serine 621–glycine 631 are compositionally biased toward polar residues. A compositionally biased stretch (basic and acidic residues) spans aspartate 635–glutamate 647. The interval proline 887–threonine 928 is disordered. The span at glutamate 901–aspartate 912 shows a compositional bias: basic and acidic residues. The Ubiquitin-like domain maps to valine 961 to isoleucine 1012.

This sequence belongs to the peptidase C19 family.

Its subcellular location is the cytoplasm. The protein resides in the nucleus. The enzyme catalyses Thiol-dependent hydrolysis of ester, thioester, amide, peptide and isopeptide bonds formed by the C-terminal Gly of ubiquitin (a 76-residue protein attached to proteins as an intracellular targeting signal).. Functionally, recognizes and hydrolyzes the peptide bond at the C-terminal Gly of ubiquitin. Involved in the processing of poly-ubiquitin precursors as well as that of ubiquitinated proteins. This chain is Ubiquitin carboxyl-terminal hydrolase 48 (usp48), found in Danio rerio (Zebrafish).